The sequence spans 190 residues: 7-methyl-GTP pyrophosphatase (190 aa).

Catalysis depends on Asp-69, which acts as the Proton acceptor.

The protein belongs to the Maf family. YceF subfamily. The cofactor is a divalent metal cation.

The protein resides in the cytoplasm. The enzyme catalyses N(7)-methyl-GTP + H2O = N(7)-methyl-GMP + diphosphate + H(+). Its function is as follows. Nucleoside triphosphate pyrophosphatase that hydrolyzes 7-methyl-GTP (m(7)GTP). May have a dual role in cell division arrest and in preventing the incorporation of modified nucleotides into cellular nucleic acids. The protein is 7-methyl-GTP pyrophosphatase of Xanthomonas oryzae pv. oryzae (strain MAFF 311018).